We begin with the raw amino-acid sequence, 319 residues long: Lipoyl synthase (319 aa).

Residues 1-28 (MVVLVDTVSSTPVRPRHPEKAARPDALS) form a disordered region. The span at 16-28 (RHPEKAARPDALS) shows a compositional bias: basic and acidic residues. The [4Fe-4S] cluster site is built by cysteine 61, cysteine 66, cysteine 72, cysteine 87, cysteine 91, cysteine 94, and serine 300. Residues 73–289 (WDKKHATFMI…AKTAYAKGFL (217 aa)) form the Radical SAM core domain.

The protein belongs to the radical SAM superfamily. Lipoyl synthase family. It depends on [4Fe-4S] cluster as a cofactor.

It is found in the cytoplasm. It catalyses the reaction [[Fe-S] cluster scaffold protein carrying a second [4Fe-4S](2+) cluster] + N(6)-octanoyl-L-lysyl-[protein] + 2 oxidized [2Fe-2S]-[ferredoxin] + 2 S-adenosyl-L-methionine + 4 H(+) = [[Fe-S] cluster scaffold protein] + N(6)-[(R)-dihydrolipoyl]-L-lysyl-[protein] + 4 Fe(3+) + 2 hydrogen sulfide + 2 5'-deoxyadenosine + 2 L-methionine + 2 reduced [2Fe-2S]-[ferredoxin]. It functions in the pathway protein modification; protein lipoylation via endogenous pathway; protein N(6)-(lipoyl)lysine from octanoyl-[acyl-carrier-protein]: step 2/2. Functionally, catalyzes the radical-mediated insertion of two sulfur atoms into the C-6 and C-8 positions of the octanoyl moiety bound to the lipoyl domains of lipoate-dependent enzymes, thereby converting the octanoylated domains into lipoylated derivatives. This chain is Lipoyl synthase, found in Rhodopseudomonas palustris (strain HaA2).